The primary structure comprises 335 residues: Ketol-acid reductoisomerase (NADP(+)) (335 aa).

One can recognise a KARI N-terminal Rossmann domain in the interval 1-182 (MATIIYDDET…GATRAGVYET (182 aa)). NADP(+)-binding positions include 25–28 (YGSQ), Arg48, Ser51, Ser53, and 83–86 (DEKQ). The active site involves His108. Gly134 is a binding site for NADP(+). The 146-residue stretch at 183–328 (TFREETETDL…KQIRANIPWL (146 aa)) folds into the KARI C-terminal knotted domain. The Mg(2+) site is built by Asp191, Glu195, Glu227, and Glu231. Ser252 is a binding site for substrate.

This sequence belongs to the ketol-acid reductoisomerase family. Mg(2+) serves as cofactor.

It catalyses the reaction (2R)-2,3-dihydroxy-3-methylbutanoate + NADP(+) = (2S)-2-acetolactate + NADPH + H(+). It carries out the reaction (2R,3R)-2,3-dihydroxy-3-methylpentanoate + NADP(+) = (S)-2-ethyl-2-hydroxy-3-oxobutanoate + NADPH + H(+). It participates in amino-acid biosynthesis; L-isoleucine biosynthesis; L-isoleucine from 2-oxobutanoate: step 2/4. It functions in the pathway amino-acid biosynthesis; L-valine biosynthesis; L-valine from pyruvate: step 2/4. Its function is as follows. Involved in the biosynthesis of branched-chain amino acids (BCAA). Catalyzes an alkyl-migration followed by a ketol-acid reduction of (S)-2-acetolactate (S2AL) to yield (R)-2,3-dihydroxy-isovalerate. In the isomerase reaction, S2AL is rearranged via a Mg-dependent methyl migration to produce 3-hydroxy-3-methyl-2-ketobutyrate (HMKB). In the reductase reaction, this 2-ketoacid undergoes a metal-dependent reduction by NADPH to yield (R)-2,3-dihydroxy-isovalerate. This is Ketol-acid reductoisomerase (NADP(+)) from Methanosarcina mazei (strain ATCC BAA-159 / DSM 3647 / Goe1 / Go1 / JCM 11833 / OCM 88) (Methanosarcina frisia).